A 407-amino-acid polypeptide reads, in one-letter code: E3 ubiquitin-protein ligase TRIM13 (407 aa).

Residues Cys-10–Arg-58 form an RING-type zinc finger. The segment at Pro-89–Ile-131 adopts a B box-type zinc-finger fold. Cys-94, His-97, Cys-117, and His-123 together coordinate Zn(2+). The stretch at Leu-172–Ile-200 forms a coiled coil. Residues Pro-316 to Leu-336 form a helical membrane-spanning segment.

As to quaternary structure, interacts (via C-terminal domain) with VCP. Interacts with AKT1; the interaction ubiquitinates AKT1 and leads to its proteasomal degradation. Interacts with MDM2; the interaction ubiquitinates AKT1 and leads to its proteasomal degradation. Interacts with p62/SQSTM1. Interacts with TRAF6. Interacts with IKBKG/NEMO. In terms of processing, auto-ubiquitinated; requires the RING-type zinc finger. Auto-polyubiquitination leads to proteasomal degradation.

The protein localises to the endoplasmic reticulum membrane. The catalysed reaction is S-ubiquitinyl-[E2 ubiquitin-conjugating enzyme]-L-cysteine + [acceptor protein]-L-lysine = [E2 ubiquitin-conjugating enzyme]-L-cysteine + N(6)-ubiquitinyl-[acceptor protein]-L-lysine.. It participates in protein modification; protein ubiquitination. Functionally, endoplasmic reticulum (ER) membrane anchored E3 ligase involved in the retrotranslocation and turnover of membrane and secretory proteins from the ER through a set of processes named ER-associated degradation (ERAD). This process acts on misfolded proteins as well as in the regulated degradation of correctly folded proteins. Enhances ionizing radiation-induced p53/TP53 stability and apoptosis via ubiquitinating MDM2 and AKT1 and decreasing AKT1 kinase activity through MDM2 and AKT1 proteasomal degradation. Regulates ER stress-induced autophagy, and may act as a tumor suppressor. Also plays a role in innate immune response by stimulating NF-kappa-B activity in the TLR2 signaling pathway. Ubiquitinates TRAF6 via the 'Lys-29'-linked polyubiquitination chain resulting in NF-kappa-B activation. Participates as well in T-cell receptor-mediated NF-kappa-B activation. In the presence of TNF, modulates the IKK complex by regulating IKBKG/NEMO ubiquitination leading to the repression of NF-kappa-B. This is E3 ubiquitin-protein ligase TRIM13 (TRIM13) from Bos taurus (Bovine).